The following is a 337-amino-acid chain: Ribosomal RNA small subunit methyltransferase C (337 aa).

The protein belongs to the methyltransferase superfamily. RsmC family. As to quaternary structure, monomer.

The protein resides in the cytoplasm. It carries out the reaction guanosine(1207) in 16S rRNA + S-adenosyl-L-methionine = N(2)-methylguanosine(1207) in 16S rRNA + S-adenosyl-L-homocysteine + H(+). Functionally, specifically methylates the guanine in position 1207 of 16S rRNA in the 30S particle. This is Ribosomal RNA small subunit methyltransferase C from Acinetobacter baumannii (strain ATCC 17978 / DSM 105126 / CIP 53.77 / LMG 1025 / NCDC KC755 / 5377).